Here is a 499-residue protein sequence, read N- to C-terminus: Probable cytosol aminopeptidase (499 aa).

Residues Lys-264 and Asp-269 each coordinate Mn(2+). The active site involves Lys-276. Positions 287, 346, and 348 each coordinate Mn(2+). The active site involves Arg-350.

It belongs to the peptidase M17 family. Mn(2+) serves as cofactor.

Its subcellular location is the cytoplasm. The catalysed reaction is Release of an N-terminal amino acid, Xaa-|-Yaa-, in which Xaa is preferably Leu, but may be other amino acids including Pro although not Arg or Lys, and Yaa may be Pro. Amino acid amides and methyl esters are also readily hydrolyzed, but rates on arylamides are exceedingly low.. It catalyses the reaction Release of an N-terminal amino acid, preferentially leucine, but not glutamic or aspartic acids.. Its function is as follows. Presumably involved in the processing and regular turnover of intracellular proteins. Catalyzes the removal of unsubstituted N-terminal amino acids from various peptides. This chain is Probable cytosol aminopeptidase, found in Rhodopseudomonas palustris (strain BisB18).